A 337-amino-acid chain; its full sequence is Glyceraldehyde-3-phosphate dehydrogenase (337 aa).

NADP(+) is bound by residues 11 to 12 (TV), 34 to 35 (TR), and Gly-110. Residue 139 to 141 (SCN) coordinates D-glyceraldehyde 3-phosphate. Residue Cys-140 is the Nucleophile of the active site. An NADP(+)-binding site is contributed by Asp-171. 194 to 195 (HG) provides a ligand contact to D-glyceraldehyde 3-phosphate. Gln-300 is a binding site for NADP(+).

This sequence belongs to the glyceraldehyde-3-phosphate dehydrogenase family. In terms of assembly, homotetramer.

The protein resides in the cytoplasm. It carries out the reaction D-glyceraldehyde 3-phosphate + phosphate + NADP(+) = (2R)-3-phospho-glyceroyl phosphate + NADPH + H(+). The enzyme catalyses D-glyceraldehyde 3-phosphate + phosphate + NAD(+) = (2R)-3-phospho-glyceroyl phosphate + NADH + H(+). Its pathway is carbohydrate degradation; glycolysis; pyruvate from D-glyceraldehyde 3-phosphate: step 1/5. Exhibits a dual-cofactor specificity, with a marked preference for NADP(+) over NAD(+). In Methanothermus fervidus, this protein is Glyceraldehyde-3-phosphate dehydrogenase (gap).